The chain runs to 200 residues: Pyridoxal 5'-phosphate synthase subunit PdxT (200 aa).

Gly-52–Ser-54 serves as a coordination point for L-glutamine. Cys-84 functions as the Nucleophile in the catalytic mechanism. L-glutamine contacts are provided by residues Arg-116 and Ile-145–Arg-146. Catalysis depends on charge relay system residues His-181 and Glu-183.

This sequence belongs to the glutaminase PdxT/SNO family. As to quaternary structure, in the presence of PdxS, forms a dodecamer of heterodimers. Only shows activity in the heterodimer.

The enzyme catalyses aldehydo-D-ribose 5-phosphate + D-glyceraldehyde 3-phosphate + L-glutamine = pyridoxal 5'-phosphate + L-glutamate + phosphate + 3 H2O + H(+). It carries out the reaction L-glutamine + H2O = L-glutamate + NH4(+). The protein operates within cofactor biosynthesis; pyridoxal 5'-phosphate biosynthesis. In terms of biological role, catalyzes the hydrolysis of glutamine to glutamate and ammonia as part of the biosynthesis of pyridoxal 5'-phosphate. The resulting ammonia molecule is channeled to the active site of PdxS. The sequence is that of Pyridoxal 5'-phosphate synthase subunit PdxT from Saccharolobus islandicus (strain Y.G.57.14 / Yellowstone #1) (Sulfolobus islandicus).